A 270-amino-acid chain; its full sequence is Probable septum site-determining protein MinC (270 aa).

The protein belongs to the MinC family. In terms of assembly, interacts with MinD and FtsZ.

Its function is as follows. Cell division inhibitor that blocks the formation of polar Z ring septums. Rapidly oscillates between the poles of the cell to destabilize FtsZ filaments that have formed before they mature into polar Z rings. Prevents FtsZ polymerization. This Cupriavidus necator (strain ATCC 17699 / DSM 428 / KCTC 22496 / NCIMB 10442 / H16 / Stanier 337) (Ralstonia eutropha) protein is Probable septum site-determining protein MinC.